A 403-amino-acid polypeptide reads, in one-letter code: Serine/threonine transporter SstT (403 aa).

Transmembrane regions (helical) follow at residues 16–36 (QIVI…AIAL), 45–65 (FVSA…MASI), 79–99 (ILWL…VASM), 138–158 (ALLN…GVAL), 175–195 (GVTL…FGLV), 214–234 (LAVL…LIVF), 295–315 (MAGA…TLGI), 327–347 (MVAA…LLLI), and 353–373 (LFGI…IIGV).

This sequence belongs to the dicarboxylate/amino acid:cation symporter (DAACS) (TC 2.A.23) family.

The protein localises to the cell inner membrane. The enzyme catalyses L-serine(in) + Na(+)(in) = L-serine(out) + Na(+)(out). It catalyses the reaction L-threonine(in) + Na(+)(in) = L-threonine(out) + Na(+)(out). Its function is as follows. Involved in the import of serine and threonine into the cell, with the concomitant import of sodium (symport system). In Pseudomonas putida (strain W619), this protein is Serine/threonine transporter SstT.